Reading from the N-terminus, the 212-residue chain is Protein GrpE (212 aa).

Residues 1 to 68 (MAETSNNKTS…ELESAKKEIE (68 aa)) are disordered. Over residues 9–30 (TSEEAKANEKKSQSETLEESKL) the composition is skewed to basic and acidic residues. Residues 40–60 (ETTQTESMETAETETSLQTEL) are compositionally biased toward low complexity.

Belongs to the GrpE family. In terms of assembly, homodimer.

It is found in the cytoplasm. Its function is as follows. Participates actively in the response to hyperosmotic and heat shock by preventing the aggregation of stress-denatured proteins, in association with DnaK and GrpE. It is the nucleotide exchange factor for DnaK and may function as a thermosensor. Unfolded proteins bind initially to DnaJ; upon interaction with the DnaJ-bound protein, DnaK hydrolyzes its bound ATP, resulting in the formation of a stable complex. GrpE releases ADP from DnaK; ATP binding to DnaK triggers the release of the substrate protein, thus completing the reaction cycle. Several rounds of ATP-dependent interactions between DnaJ, DnaK and GrpE are required for fully efficient folding. The chain is Protein GrpE from Leptospira interrogans serogroup Icterohaemorrhagiae serovar copenhageni (strain Fiocruz L1-130).